Here is a 332-residue protein sequence, read N- to C-terminus: Glyceraldehyde-3-phosphate dehydrogenase 1 (332 aa).

Residues 11–12 (RI), Asp-33, and Arg-78 each bind NAD(+). D-glyceraldehyde 3-phosphate-binding positions include 149-151 (SCT), Thr-180, 209-210 (TG), and Arg-232. Cys-150 serves as the catalytic Nucleophile. Asn-314 is an NAD(+) binding site.

The protein belongs to the glyceraldehyde-3-phosphate dehydrogenase family. As to quaternary structure, homotetramer.

It is found in the cytoplasm. The catalysed reaction is D-glyceraldehyde 3-phosphate + phosphate + NAD(+) = (2R)-3-phospho-glyceroyl phosphate + NADH + H(+). It participates in carbohydrate degradation; glycolysis; pyruvate from D-glyceraldehyde 3-phosphate: step 1/5. The polypeptide is Glyceraldehyde-3-phosphate dehydrogenase 1 (GPD1) (Candida glabrata (strain ATCC 2001 / BCRC 20586 / JCM 3761 / NBRC 0622 / NRRL Y-65 / CBS 138) (Yeast)).